The primary structure comprises 381 residues: DNA replication and repair protein RecF (381 aa).

An ATP-binding site is contributed by Gly30–Thr37.

The protein belongs to the RecF family.

The protein localises to the cytoplasm. The RecF protein is involved in DNA metabolism; it is required for DNA replication and normal SOS inducibility. RecF binds preferentially to single-stranded, linear DNA. It also seems to bind ATP. This Lactobacillus delbrueckii subsp. bulgaricus (strain ATCC 11842 / DSM 20081 / BCRC 10696 / JCM 1002 / NBRC 13953 / NCIMB 11778 / NCTC 12712 / WDCM 00102 / Lb 14) protein is DNA replication and repair protein RecF.